Consider the following 517-residue polypeptide: Nicotine N-demethylase CYP82E4 (517 aa).

The helical transmembrane segment at 2–22 (VFPIEAIVGLVTFTFLFFFLW) threads the bilayer. Lys-254 participates in a covalent cross-link: Glycyl lysine isopeptide (Lys-Gly) (interchain with G-Cter in ubiquitin). Cys-457 lines the heme pocket.

It belongs to the cytochrome P450 family. CYP82E2 subfamily. Heme serves as cofactor. As to expression, expressed at low levels in green leaves.

The protein resides in the membrane. The catalysed reaction is (S)-nicotine + reduced [NADPH--hemoprotein reductase] + O2 = (S)-nornicotine + formaldehyde + oxidized [NADPH--hemoprotein reductase] + H2O + H(+). It functions in the pathway alkaloid biosynthesis; nicotine biosynthesis. Its function is as follows. Involved in the biosynthesis of pyridine alkaloid natural products, leading mainly to the production of anabasine, anatabine, nicotine and nornicotine, effective deterrents against herbivores with antiparasitic and pesticide properties (neurotoxins); nornicotine serves as the precursor in the synthesis of the carcinogen compound N'-nitrosonornicotine (NNN). Catalyzes the demethylation of nicotine to form nornicotine. The sequence is that of Nicotine N-demethylase CYP82E4 from Nicotiana tabacum (Common tobacco).